The following is a 172-amino-acid chain: uncharacterized protein (172 aa).

This sequence belongs to the flavoredoxin family. The cofactor is FMN.

This is an uncharacterized protein from Pyrococcus abyssi (strain GE5 / Orsay).